The primary structure comprises 609 residues: Dihydroxy-acid dehydratase (609 aa).

Asp-81 lines the Mg(2+) pocket. Cys-122 contacts [2Fe-2S] cluster. Asp-123 and Lys-124 together coordinate Mg(2+). N6-carboxylysine is present on Lys-124. Cys-195 serves as a coordination point for [2Fe-2S] cluster. A Mg(2+)-binding site is contributed by Glu-491. The active-site Proton acceptor is the Ser-517.

Belongs to the IlvD/Edd family. Homodimer. It depends on [2Fe-2S] cluster as a cofactor. The cofactor is Mg(2+).

The enzyme catalyses (2R)-2,3-dihydroxy-3-methylbutanoate = 3-methyl-2-oxobutanoate + H2O. The catalysed reaction is (2R,3R)-2,3-dihydroxy-3-methylpentanoate = (S)-3-methyl-2-oxopentanoate + H2O. It functions in the pathway amino-acid biosynthesis; L-isoleucine biosynthesis; L-isoleucine from 2-oxobutanoate: step 3/4. It participates in amino-acid biosynthesis; L-valine biosynthesis; L-valine from pyruvate: step 3/4. Functionally, functions in the biosynthesis of branched-chain amino acids. Catalyzes the dehydration of (2R,3R)-2,3-dihydroxy-3-methylpentanoate (2,3-dihydroxy-3-methylvalerate) into 2-oxo-3-methylpentanoate (2-oxo-3-methylvalerate) and of (2R)-2,3-dihydroxy-3-methylbutanoate (2,3-dihydroxyisovalerate) into 2-oxo-3-methylbutanoate (2-oxoisovalerate), the penultimate precursor to L-isoleucine and L-valine, respectively. This chain is Dihydroxy-acid dehydratase, found in Acinetobacter baumannii (strain AB0057).